The primary structure comprises 429 residues: Glutamate-1-semialdehyde 2,1-aminomutase (429 aa).

Position 267 is an N6-(pyridoxal phosphate)lysine (K267).

It belongs to the class-III pyridoxal-phosphate-dependent aminotransferase family. HemL subfamily. In terms of assembly, homodimer. The cofactor is pyridoxal 5'-phosphate.

It is found in the cytoplasm. It catalyses the reaction (S)-4-amino-5-oxopentanoate = 5-aminolevulinate. Its pathway is porphyrin-containing compound metabolism; protoporphyrin-IX biosynthesis; 5-aminolevulinate from L-glutamyl-tRNA(Glu): step 2/2. This Herpetosiphon aurantiacus (strain ATCC 23779 / DSM 785 / 114-95) protein is Glutamate-1-semialdehyde 2,1-aminomutase.